Reading from the N-terminus, the 289-residue chain is 1D-myo-inositol 2-acetamido-2-deoxy-alpha-D-glucopyranoside deacetylase 1 (289 aa).

Residues histidine 4, aspartate 7, and histidine 140 each coordinate Zn(2+).

It belongs to the MshB deacetylase family. It depends on Zn(2+) as a cofactor.

The catalysed reaction is 1D-myo-inositol 2-acetamido-2-deoxy-alpha-D-glucopyranoside + H2O = 1D-myo-inositol 2-amino-2-deoxy-alpha-D-glucopyranoside + acetate. Functionally, catalyzes the deacetylation of 1D-myo-inositol 2-acetamido-2-deoxy-alpha-D-glucopyranoside (GlcNAc-Ins) in the mycothiol biosynthesis pathway. The polypeptide is 1D-myo-inositol 2-acetamido-2-deoxy-alpha-D-glucopyranoside deacetylase 1 (Frankia alni (strain DSM 45986 / CECT 9034 / ACN14a)).